The sequence spans 597 residues: Arginine--tRNA ligase (597 aa).

Positions 138–148 (ANPTGPMHVGH) match the 'HIGH' region motif.

Belongs to the class-I aminoacyl-tRNA synthetase family. Monomer.

It is found in the cytoplasm. The catalysed reaction is tRNA(Arg) + L-arginine + ATP = L-arginyl-tRNA(Arg) + AMP + diphosphate. In Nitrobacter hamburgensis (strain DSM 10229 / NCIMB 13809 / X14), this protein is Arginine--tRNA ligase.